The primary structure comprises 687 residues: Ferric vibriobactin receptor ViuA (687 aa).

The signal sequence occupies residues 1 to 37 (MAVLCPARVSVAENKKFKLHTLSAMMMGLFTGSFAYA). Positions 62–184 (SIYETSASVE…SAGAIVMKSN (123 aa)) constitute a TBDR plug domain. Residues 189–687 (HFESAVKAGI…MIGASVQLNF (499 aa)) enclose the TBDR beta-barrel domain.

It belongs to the TonB-dependent receptor family.

The protein resides in the cell outer membrane. In terms of biological role, involved in the uptake of iron in complex with vibriobactin, a catecholate siderophore synthesized by V.cholerae. Binds and transports ferric vibriobactin across the outer membrane. The energy source is provided by the inner membrane TonB system. This Vibrio cholerae serotype O1 (strain ATCC 39541 / Classical Ogawa 395 / O395) protein is Ferric vibriobactin receptor ViuA.